A 445-amino-acid polypeptide reads, in one-letter code: Methylenetetrahydrofolate--tRNA-(uracil-5-)-methyltransferase TrmFO (445 aa).

Glycine 9–glycine 14 provides a ligand contact to FAD.

This sequence belongs to the MnmG family. TrmFO subfamily. FAD is required as a cofactor.

It is found in the cytoplasm. It carries out the reaction uridine(54) in tRNA + (6R)-5,10-methylene-5,6,7,8-tetrahydrofolate + NADH + H(+) = 5-methyluridine(54) in tRNA + (6S)-5,6,7,8-tetrahydrofolate + NAD(+). The enzyme catalyses uridine(54) in tRNA + (6R)-5,10-methylene-5,6,7,8-tetrahydrofolate + NADPH + H(+) = 5-methyluridine(54) in tRNA + (6S)-5,6,7,8-tetrahydrofolate + NADP(+). Catalyzes the folate-dependent formation of 5-methyl-uridine at position 54 (M-5-U54) in all tRNAs. The sequence is that of Methylenetetrahydrofolate--tRNA-(uracil-5-)-methyltransferase TrmFO from Aquifex aeolicus (strain VF5).